The primary structure comprises 232 residues: Ubiquinone biosynthesis O-methyltransferase (232 aa).

S-adenosyl-L-methionine-binding residues include arginine 36, glycine 55, aspartate 76, and methionine 120.

Belongs to the methyltransferase superfamily. UbiG/COQ3 family.

The enzyme catalyses a 3-demethylubiquinol + S-adenosyl-L-methionine = a ubiquinol + S-adenosyl-L-homocysteine + H(+). It carries out the reaction a 3-(all-trans-polyprenyl)benzene-1,2-diol + S-adenosyl-L-methionine = a 2-methoxy-6-(all-trans-polyprenyl)phenol + S-adenosyl-L-homocysteine + H(+). Its pathway is cofactor biosynthesis; ubiquinone biosynthesis. Functionally, O-methyltransferase that catalyzes the 2 O-methylation steps in the ubiquinone biosynthetic pathway. In Burkholderia mallei (strain ATCC 23344), this protein is Ubiquinone biosynthesis O-methyltransferase.